A 94-amino-acid chain; its full sequence is RNA-binding protein Hfq (94 aa).

The Sm domain maps to 9 to 68 (DPFLNALRRERVPVSIYLVNGIKLQGQVESFDQFVILLKNTVSQMVYKHAISTVVPARPF). Positions 70–94 (VSAHHSSPAPTPAGGFNGQNDETSE) are disordered.

It belongs to the Hfq family. In terms of assembly, homohexamer.

Functionally, RNA chaperone that binds small regulatory RNA (sRNAs) and mRNAs to facilitate mRNA translational regulation in response to envelope stress, environmental stress and changes in metabolite concentrations. Also binds with high specificity to tRNAs. This is RNA-binding protein Hfq from Shewanella woodyi (strain ATCC 51908 / MS32).